The chain runs to 585 residues: Serine/threonine-protein kinase PknI (585 aa).

Residues 1–349 lie on the Cytoplasmic side of the membrane; sequence MALASGVTFA…ASPTRRRPRR (349 aa). The Protein kinase domain maps to 12-252; the sequence is YTVVRMLGCS…SCREFADAMN (241 aa). ATP-binding positions include 18 to 26 and Lys-41; that span reads LGCSAMGEV. Lys-41, Asp-90, and Val-92 together coordinate ADP. The active-site Proton acceptor is the Asp-137. A helical transmembrane segment spans residues 350–370; that stretch reads ILVGAVAVLLLAGLFAVGIVI. Over 371–585 the chain is Extracellular; sequence GRKTNTTATE…PTTTAPGPGR (215 aa). Positions 546-585 are disordered; sequence SGDLPPAVTVPDPATIPDTPDTTSTATLTPPTTTAPGPGR. The segment covering 554-585 has biased composition (low complexity); that stretch reads TVPDPATIPDTPDTTSTATLTPPTTTAPGPGR.

This sequence belongs to the protein kinase superfamily. Ser/Thr protein kinase family. Mn(2+) is required as a cofactor. Autophosphorylated at serine and threonine residues.

The protein resides in the cytoplasm. The protein localises to the cell membrane. The catalysed reaction is L-seryl-[protein] + ATP = O-phospho-L-seryl-[protein] + ADP + H(+). The enzyme catalyses L-threonyl-[protein] + ATP = O-phospho-L-threonyl-[protein] + ADP + H(+). In terms of biological role, plays an important role in slowing down the growth of mycobacteria within the infected host. In Mycobacterium bovis (strain ATCC BAA-935 / AF2122/97), this protein is Serine/threonine-protein kinase PknI (pknI).